A 252-amino-acid chain; its full sequence is MMLHAQHMPGQPGTPSLVFLHGFSGDCHEWQPVGEQFHGCSRLYIDLPGHGGSAAIPVDGFADVIRLLRATLISYNILKFWLVGYSLGGRVAMMAACQGIPGLCGLVVEGGHPGLQNEQARAERRLSDGRWAERFRHEPLTEVFHDWYQQPVFASLTAQQRQALTALRSQNNGETLAAMLEATSLAVQPDLREALNALAFPFYYLCGERDSKFRALAQEVAATCHVIRNAGHNAHRENPAGVVDSLAQILRL.

It belongs to the AB hydrolase superfamily. MenH family. In terms of assembly, monomer.

It carries out the reaction 5-enolpyruvoyl-6-hydroxy-2-succinyl-cyclohex-3-ene-1-carboxylate = (1R,6R)-6-hydroxy-2-succinyl-cyclohexa-2,4-diene-1-carboxylate + pyruvate. Its pathway is quinol/quinone metabolism; 1,4-dihydroxy-2-naphthoate biosynthesis; 1,4-dihydroxy-2-naphthoate from chorismate: step 3/7. It participates in quinol/quinone metabolism; menaquinone biosynthesis. Catalyzes a proton abstraction reaction that results in 2,5-elimination of pyruvate from 2-succinyl-5-enolpyruvyl-6-hydroxy-3-cyclohexene-1-carboxylate (SEPHCHC) and the formation of 2-succinyl-6-hydroxy-2,4-cyclohexadiene-1-carboxylate (SHCHC). The protein is 2-succinyl-6-hydroxy-2,4-cyclohexadiene-1-carboxylate synthase of Salmonella typhimurium (strain LT2 / SGSC1412 / ATCC 700720).